The chain runs to 396 residues: Elongation factor Tu (396 aa).

The 197-residue stretch at 10–206 folds into the tr-type G domain; that stretch reads KPHVNVGTIG…ALDTYIPTPE (197 aa). The tract at residues 19–26 is G1; it reads GHVDHGKT. A GTP-binding site is contributed by 19–26; the sequence is GHVDHGKT. Thr26 is a Mg(2+) binding site. The tract at residues 60 to 64 is G2; sequence GITIN. Positions 81 to 84 are G3; sequence DCPG. GTP contacts are provided by residues 81–85 and 136–139; these read DCPGH and NKCD. The tract at residues 136–139 is G4; that stretch reads NKCD. The segment at 174 to 176 is G5; it reads SAK.

This sequence belongs to the TRAFAC class translation factor GTPase superfamily. Classic translation factor GTPase family. EF-Tu/EF-1A subfamily. In terms of assembly, monomer.

It is found in the cytoplasm. It catalyses the reaction GTP + H2O = GDP + phosphate + H(+). Its function is as follows. GTP hydrolase that promotes the GTP-dependent binding of aminoacyl-tRNA to the A-site of ribosomes during protein biosynthesis. The chain is Elongation factor Tu from Burkholderia mallei (strain NCTC 10247).